We begin with the raw amino-acid sequence, 268 residues long: Tryptophan synthase alpha chain (268 aa).

Catalysis depends on proton acceptor residues Glu-49 and Asp-60.

It belongs to the TrpA family. As to quaternary structure, tetramer of two alpha and two beta chains.

The catalysed reaction is (1S,2R)-1-C-(indol-3-yl)glycerol 3-phosphate + L-serine = D-glyceraldehyde 3-phosphate + L-tryptophan + H2O. It functions in the pathway amino-acid biosynthesis; L-tryptophan biosynthesis; L-tryptophan from chorismate: step 5/5. The alpha subunit is responsible for the aldol cleavage of indoleglycerol phosphate to indole and glyceraldehyde 3-phosphate. The protein is Tryptophan synthase alpha chain of Escherichia coli O6:K15:H31 (strain 536 / UPEC).